A 227-amino-acid chain; its full sequence is MKTQKQQYVTIKGTKNGLTLQLNDDCSFDDLLSGLRELLLLEQYTDGREGHKVNVHIKLGFRYLTEDQEMRLTEAVSENEHLVIHSIESDVMSTEEAKRLKAEAEITSVAKIVRSGQVLYVEGDLLLIGDVNPGGTIRAGGNIFVLGALKGVAHAGCNGNKQAVIAASRMIPTQLRIAQVFNRAPDQKEDGNEMECAYLDIDGNMIIERLQQLAHIRPNLTRLEGGM.

The protein belongs to the MinC family. As to quaternary structure, interacts with MinD and FtsZ.

Cell division inhibitor that blocks the formation of polar Z ring septums. Rapidly oscillates between the poles of the cell to destabilize FtsZ filaments that have formed before they mature into polar Z rings. Prevents FtsZ polymerization. The sequence is that of Probable septum site-determining protein MinC from Bacillus pumilus (strain SAFR-032).